The following is a 166-amino-acid chain: Fer3-like protein (166 aa).

Residues 57–88 (FEEGDPEEEECEVDQGDGEEEEEEERGRGVSL) form a disordered region. Residues 60 to 80 (GDPEEEECEVDQGDGEEEEEE) are compositionally biased toward acidic residues. In terms of domain architecture, bHLH spans 101-153 (AQRQAANIRERKRMFNLNEAFDQLRRKVPTFAYEKRLSRIETLRLAIVYISFM).

As to quaternary structure, heterodimer with TCF3/E12. Interacts with the bHLH domain of TCF3/E12.

It localises to the nucleus. Transcription factor that binds to the E-box and functions as inhibitor of transcription. DNA binding requires dimerization with an E protein. Inhibits transcription activation by ASCL1/MASH1 by sequestering E proteins. In Homo sapiens (Human), this protein is Fer3-like protein (FERD3L).